A 593-amino-acid polypeptide reads, in one-letter code: Kelch-like protein 2 (593 aa).

Residues 1 to 29 (MESPPLPPACTKQGHQKPLDSKDENPEKH) form a disordered region. A compositionally biased stretch (basic and acidic residues) spans 17–29 (KPLDSKDENPEKH). A BTB domain is found at 56–123 (CDVTIVAEDM…VYTAEIQVTE (68 aa)). Kelch repeat units lie at residues 308–353 (LMVV…YMAG), 354–400 (LVFA…VLNG), 402–447 (LYAV…VVGG), 449–496 (LYAV…VLNN), 497–543 (LLYA…AVNG), and 545–591 (LYVV…VIDK).

In terms of assembly, component of the BCR(KLHL2) E3 ubiquitin ligase complex, at least composed of CUL3 and KLHL2 and RBX1. Binds actin. Interacts with KLHL12. Interacts (via N-terminus) with FYN (via SH3 domain). Detected in brain neurons, oligodendrocytes and astrocytes (at protein level).

Its subcellular location is the cytoplasm. The protein resides in the cytoskeleton. The protein localises to the cell projection. It localises to the ruffle. It is found in the lamellipodium. Its subcellular location is the cytosol. It participates in protein modification; protein ubiquitination. Functionally, substrate-specific adapter of a BCR (BTB-CUL3-RBX1) E3 ubiquitin ligase complex that mediates the ubiquitination of target proteins, such as NPTXR, WNK1, WNK3 and WNK4, leading most often to their proteasomal degradation. The BCR(KLHL2) complex catalyzes ubiquitination and degradation of NPTXR. Responsible for degradative ubiquitination of the WNK kinases WNK1, WNK3 and WNK4. Plays a role in the reorganization of the actin cytoskeleton. Promotes growth of cell projections in oligodendrocyte precursors. In Rattus norvegicus (Rat), this protein is Kelch-like protein 2.